Reading from the N-terminus, the 258-residue chain is Phosphate import ATP-binding protein PstB (258 aa).

Residues 5-247 (LDLKDVNIYY…EKIFSNPRQK (243 aa)) enclose the ABC transporter domain. 37 to 44 (GPSGCGKS) contacts ATP.

The protein belongs to the ABC transporter superfamily. Phosphate importer (TC 3.A.1.7) family. In terms of assembly, the complex is composed of two ATP-binding proteins (PstB), two transmembrane proteins (PstC and PstA) and a solute-binding protein (PstS).

It is found in the cell membrane. The catalysed reaction is phosphate(out) + ATP + H2O = ADP + 2 phosphate(in) + H(+). Part of the ABC transporter complex PstSACB involved in phosphate import. Responsible for energy coupling to the transport system. The polypeptide is Phosphate import ATP-binding protein PstB (Mycolicibacterium smegmatis (Mycobacterium smegmatis)).